Here is a 37-residue protein sequence, read N- to C-terminus: Large ribosomal subunit protein bL36c (37 aa).

Belongs to the bacterial ribosomal protein bL36 family.

The protein resides in the plastid. Its subcellular location is the chloroplast. This Angiopteris evecta (Mule's foot fern) protein is Large ribosomal subunit protein bL36c.